Reading from the N-terminus, the 335-residue chain is Tryptophan--tRNA ligase (335 aa).

ATP-binding positions include glutamine 13–serine 15 and glycine 21–asparagine 22. A 'HIGH' region motif is present at residues proline 14–asparagine 22. An L-tryptophan-binding site is contributed by aspartate 138. Residues glycine 150–aspartate 152, isoleucine 189, and lysine 198–serine 202 contribute to the ATP site. Positions lysine 198–serine 202 match the 'KMSKS' region motif.

The protein belongs to the class-I aminoacyl-tRNA synthetase family. As to quaternary structure, homodimer.

The protein resides in the cytoplasm. It carries out the reaction tRNA(Trp) + L-tryptophan + ATP = L-tryptophyl-tRNA(Trp) + AMP + diphosphate + H(+). Functionally, catalyzes the attachment of tryptophan to tRNA(Trp). This chain is Tryptophan--tRNA ligase, found in Clostridium acetobutylicum (strain ATCC 824 / DSM 792 / JCM 1419 / IAM 19013 / LMG 5710 / NBRC 13948 / NRRL B-527 / VKM B-1787 / 2291 / W).